A 113-amino-acid polypeptide reads, in one-letter code: Endoribonuclease SymE (113 aa).

Residues Ser29–Ala74 form the SpoVT-AbrB domain.

Belongs to the SymE family.

The protein localises to the cytoplasm. Involved in the degradation and recycling of damaged RNA. It is itself a target for degradation by the ATP-dependent protease Lon. This chain is Endoribonuclease SymE, found in Shigella flexneri serotype 5b (strain 8401).